Here is a 202-residue protein sequence, read N- to C-terminus: Dephospho-CoA kinase (202 aa).

In terms of domain architecture, DPCK spans 4-202 (VIGLTGGIAT…TDKGFINKER (199 aa)). Residue 12 to 17 (ATGKST) participates in ATP binding.

The protein belongs to the CoaE family.

It localises to the cytoplasm. It catalyses the reaction 3'-dephospho-CoA + ATP = ADP + CoA + H(+). It functions in the pathway cofactor biosynthesis; coenzyme A biosynthesis; CoA from (R)-pantothenate: step 5/5. Catalyzes the phosphorylation of the 3'-hydroxyl group of dephosphocoenzyme A to form coenzyme A. The protein is Dephospho-CoA kinase of Staphylococcus haemolyticus (strain JCSC1435).